The chain runs to 135 residues: U-myrmeciitoxin(01)-Mg7a (135 aa).

The N-terminal stretch at 1 to 21 (MKLSCLSLALAIILLLAIVHS) is a signal peptide. A propeptide spanning residues 22–72 (PNMEVKALAGPEADAIGFADAFGEADAFGEADAFGEADAFGEADAFGEADA) is cleaved from the precursor. The interval 69 to 95 (EADAKRSKSSSKTKPKKPKKPKKKIKI) is disordered. A compositionally biased stretch (basic residues) spans 75-93 (SKSSSKTKPKKPKKPKKKI). O-linked (GalNAc...) serine glycosylation is present at S120. T129 and T130 each carry an O-linked (GalNAc...) threonine glycan.

The protein belongs to the formicidae venom precursor-01 superfamily. Glycosylation is critical to maintaining the aqueous solubility of this protein, but does not directly contribute to its activity. Expressed by the venom gland.

The protein resides in the secreted. It is found in the target cell membrane. Its function is as follows. Neurotoxin that triggers pain behavior and inflammation in mammals, and is paralytic and lethal to insects. Causes a time-dependent increase in cell leak current. May act by targeting membranes. In Myrmecia gulosa (Red bulldog ant), this protein is U-myrmeciitoxin(01)-Mg7a.